A 721-amino-acid polypeptide reads, in one-letter code: Catalase-peroxidase (721 aa).

Positions 89-212 (WHSAGTYRTG…LAAVQMGLIY (124 aa)) form a cross-link, tryptophyl-tyrosyl-methioninium (Trp-Tyr) (with M-238). Histidine 90 functions as the Proton acceptor in the catalytic mechanism. Positions 212–238 (YVNPEGPNGDPDPFAAAVDIRETFARM) form a cross-link, tryptophyl-tyrosyl-methioninium (Tyr-Met) (with W-89). Histidine 253 is a binding site for heme b.

It belongs to the peroxidase family. Peroxidase/catalase subfamily. In terms of assembly, homodimer or homotetramer. It depends on heme b as a cofactor. Formation of the three residue Trp-Tyr-Met cross-link is important for the catalase, but not the peroxidase activity of the enzyme.

It carries out the reaction H2O2 + AH2 = A + 2 H2O. The catalysed reaction is 2 H2O2 = O2 + 2 H2O. Bifunctional enzyme with both catalase and broad-spectrum peroxidase activity. In Shewanella baltica (strain OS155 / ATCC BAA-1091), this protein is Catalase-peroxidase.